Reading from the N-terminus, the 468-residue chain is Charged multivesicular body protein 7 (468 aa).

2 coiled-coil regions span residues Glu-233–Asp-303 and Val-353–Asp-379. A disordered region spans residues Asp-428–Gln-468.

This sequence belongs to the SNF7 family.

The protein localises to the cytoplasm. The protein resides in the nucleus envelope. In terms of biological role, ESCRT-III-like protein required to recruit the ESCRT-III complex to the nuclear envelope during late anaphase. Together with SPAST, the ESCRT-III complex promotes nuclear envelope sealing and mitotic spindle disassembly during late anaphase. Plays a role in the endosomal sorting pathway. The protein is Charged multivesicular body protein 7 (chmp7) of Xenopus tropicalis (Western clawed frog).